Reading from the N-terminus, the 452-residue chain is NADH-ubiquinone oxidoreductase chain 4 (452 aa).

14 helical membrane-spanning segments follow: residues 4–24 (LVLGYVGLVIGVIVTKKSMVW), 29–49 (VGSVLLMLPATVLVNMNMTIS), 59–79 (FVSLGLTVLSIWLLPLMLLAS), 88–110 (LIYQRVFVGCQVFLTGALVLAFM), 114–136 (LLLFYIAFESTLLPTLMLITRWG), 144–164 (AGTYFMFFTLVGSLPLLICLI), 182–202 (VFQLSYLVNFWWVGCILAFLV), 221–241 (PIAGSMVLAGVLLKLGGYGMM), 252–272 (MLSSEVFLALALWGIVVMGGI), 282–304 (LIAYSSVGHMALVVGGVLTGVAW), 309–331 (AMVLMIAHGLVSSCLFCLANLWY), 345–365 (LIMIFPLISSGWFLMSLMNMA), 390–410 (IVYMSLGAVLTAAYSLYLFGM), and 432–452 (LLTTLHLVPAIYLIFYLGLMF).

This sequence belongs to the complex I subunit 4 family.

Its subcellular location is the mitochondrion membrane. It carries out the reaction a ubiquinone + NADH + 5 H(+)(in) = a ubiquinol + NAD(+) + 4 H(+)(out). Functionally, core subunit of the mitochondrial membrane respiratory chain NADH dehydrogenase (Complex I) that is believed to belong to the minimal assembly required for catalysis. Complex I functions in the transfer of electrons from NADH to the respiratory chain. The immediate electron acceptor for the enzyme is believed to be ubiquinone. In Branchiostoma floridae (Florida lancelet), this protein is NADH-ubiquinone oxidoreductase chain 4 (ND4).